The chain runs to 51 residues: Large ribosomal subunit protein eL39x (51 aa).

This sequence belongs to the eukaryotic ribosomal protein eL39 family.

This Oryza sativa subsp. japonica (Rice) protein is Large ribosomal subunit protein eL39x (RPL39C).